Here is a 778-residue protein sequence, read N- to C-terminus: Hyperosmolality-gated Ca2+ permeable channel 1.4 (778 aa).

10 helical membrane passes run 7–27, 101–121, 158–178, 375–395, 427–447, 467–487, 512–532, 584–604, 626–646, and 651–671; these read IGLA…LFAI, IYLI…SILV, FWAH…VLMK, FVMH…IAFV, FLPG…LMIM, YYIF…SAFE, ATFF…GEIF, PVTP…YLVF, VHGR…GLMS, and VQST…HRFC. Positions 738–778 are disordered; that stretch reads VVQTKRQRSRRTTVASSNASRGSSQSTPFNQLDLGKGKPET. Positions 753–763 are enriched in low complexity; it reads SSNASRGSSQS.

This sequence belongs to the CSC1 (TC 1.A.17) family.

It is found in the membrane. Acts as an osmosensitive calcium-permeable cation channel. The sequence is that of Hyperosmolality-gated Ca2+ permeable channel 1.4 from Arabidopsis thaliana (Mouse-ear cress).